Reading from the N-terminus, the 138-residue chain is Transcription antitermination protein NusB (138 aa).

It belongs to the NusB family.

Its function is as follows. Involved in transcription antitermination. Required for transcription of ribosomal RNA (rRNA) genes. Binds specifically to the boxA antiterminator sequence of the ribosomal RNA (rrn) operons. The protein is Transcription antitermination protein NusB of Geobacter sulfurreducens (strain ATCC 51573 / DSM 12127 / PCA).